The primary structure comprises 179 residues: Large ribosomal subunit protein uL5 (179 aa).

Belongs to the universal ribosomal protein uL5 family. As to quaternary structure, part of the 50S ribosomal subunit; part of the 5S rRNA/L5/L18/L25 subcomplex. Contacts the 5S rRNA and the P site tRNA. Forms a bridge to the 30S subunit in the 70S ribosome.

Its function is as follows. This is one of the proteins that bind and probably mediate the attachment of the 5S RNA into the large ribosomal subunit, where it forms part of the central protuberance. In the 70S ribosome it contacts protein S13 of the 30S subunit (bridge B1b), connecting the 2 subunits; this bridge is implicated in subunit movement. Contacts the P site tRNA; the 5S rRNA and some of its associated proteins might help stabilize positioning of ribosome-bound tRNAs. This is Large ribosomal subunit protein uL5 from Aromatoleum aromaticum (strain DSM 19018 / LMG 30748 / EbN1) (Azoarcus sp. (strain EbN1)).